Reading from the N-terminus, the 184-residue chain is Phosphonoformate cytidylyltransferase (184 aa).

The catalysed reaction is phosphonoformate + CTP = CMP-5'-phosphonoformate + diphosphate. Its pathway is secondary metabolite biosynthesis; bialaphos biosynthesis. Catalyzes the displacement of the beta- and gamma-phosphates of CTP by phosphonoformate to produce CMP-5'-phosphonoformate, an intermediate in the biosynthesis of phosphinothricin tripeptide (PTT), also known as bialaphos (BA), a natural-product antibiotic and potent herbicide. This Streptomyces viridochromogenes (strain DSM 40736 / JCM 4977 / BCRC 1201 / Tue 494) protein is Phosphonoformate cytidylyltransferase.